Here is a 295-residue protein sequence, read N- to C-terminus: MKQYLQVTKPGIIFGNLISVIGGFLLASKGSLDVPLFILTMAGVSLVVASGCVFNNYIDRDIDCIMERTKNRALVRGLIAPGVSLWYASALGVAGIALLYWAANPLAALLAVLGFIVYVGVYSLYMKRHSVYGTLVGSLSGAAPPVIGYCAVSGQFDSGALILLAIFSLWQMPHSYAIAIFRFKDYQAANIPVLPVVKGIVVAKHHITLYILAFMVPTLMLFLGGYAGYKYLIVATAVSVWWLGMALSGYKQAVDDSLWARKLFMFSIVTITCLSVMMSVDFQPDATPVLVSMLP.

The next 9 helical transmembrane spans lie at 7-27, 34-54, 78-98, 106-126, 131-151, 161-181, 207-227, 228-248, and 263-283; these read VTKPGIIFGNLISVIGGFLLA, VPLFILTMAGVSLVVASGCVF, LIAPGVSLWYASALGVAGIAL, LAALLAVLGFIVYVGVYSLYM, VYGTLVGSLSGAAPPVIGYCA, LILLAIFSLWQMPHSYAIAIF, ITLYILAFMVPTLMLFLGGYA, GYKYLIVATAVSVWWLGMALS, and LFMFSIVTITCLSVMMSVDFQ.

This sequence belongs to the UbiA prenyltransferase family. Protoheme IX farnesyltransferase subfamily.

It localises to the cell inner membrane. It carries out the reaction heme b + (2E,6E)-farnesyl diphosphate + H2O = Fe(II)-heme o + diphosphate. Its pathway is porphyrin-containing compound metabolism; heme O biosynthesis; heme O from protoheme: step 1/1. Converts heme B (protoheme IX) to heme O by substitution of the vinyl group on carbon 2 of heme B porphyrin ring with a hydroxyethyl farnesyl side group. In Aeromonas salmonicida (strain A449), this protein is Protoheme IX farnesyltransferase.